A 984-amino-acid polypeptide reads, in one-letter code: Putative formate dehydrogenase SAR2393 (984 aa).

The region spanning 3–79 (EHLVVTLDGK…PMTVNTVNND (77 aa)) is the 2Fe-2S ferredoxin-type domain. 4 residues coordinate [2Fe-2S] cluster: C37, C48, C51, and C63. The region spanning 79–119 (DVKDAQKEALDRILEKHMLYCTVCDYNNGDCEIHNTMDAWG) is the 4Fe-4S His(Cys)3-ligated-type domain. H95, C99, C102, C109, C147, C150, C153, C157, C190, C193, C196, C200, C264, C267, C271, and C299 together coordinate [4Fe-4S] cluster. 4Fe-4S ferredoxin-type domains follow at residues 138-165 (PFYR…LNET) and 181-211 (NDVP…VNME). The tract at residues 252-984 (MRKERIKKTK…YVFPGNQVDK (733 aa)) is formate dehydrogenase. One can recognise a 4Fe-4S Mo/W bis-MGD-type domain in the interval 257-313 (IKKTKTVCTYCGVGCSFEVWTKDREILKVQPSHDSPANKIATCVKGKFSWGHINSDQ).

In the C-terminal section; belongs to the prokaryotic molybdopterin-containing oxidoreductase family. It depends on [2Fe-2S] cluster as a cofactor. The cofactor is [4Fe-4S] cluster. Mo-bis(molybdopterin guanine dinucleotide) serves as cofactor.

It catalyses the reaction formate + NAD(+) = CO2 + NADH. The chain is Putative formate dehydrogenase SAR2393 from Staphylococcus aureus (strain MRSA252).